A 254-amino-acid polypeptide reads, in one-letter code: MTAKRIIPCLDVDAGRVVKGVRFVDIRDAGDPVEIARRYDAMGADELTFLDITASHEERETIYDVVEAVAGQVFIPLTVGGGVRSVADVRRLLNAGADKVAINTAAVHRPDFVREAAERFGSQCIVVAVDAKQVEDDPPRWEVFTHGGRNPTGLEVVSWCQRLVALGAGEILLTSMDRDGTRAGFDLGLTRAVADAVSVPVIASGGVGELEHLADGVDDGGADAVLAASIFHFGDHTVGEAKAHMAERGIEVRR.

Active-site residues include D11 and D130.

It belongs to the HisA/HisF family. In terms of assembly, heterodimer of HisH and HisF.

The protein localises to the cytoplasm. It carries out the reaction 5-[(5-phospho-1-deoxy-D-ribulos-1-ylimino)methylamino]-1-(5-phospho-beta-D-ribosyl)imidazole-4-carboxamide + L-glutamine = D-erythro-1-(imidazol-4-yl)glycerol 3-phosphate + 5-amino-1-(5-phospho-beta-D-ribosyl)imidazole-4-carboxamide + L-glutamate + H(+). The protein operates within amino-acid biosynthesis; L-histidine biosynthesis; L-histidine from 5-phospho-alpha-D-ribose 1-diphosphate: step 5/9. Functionally, IGPS catalyzes the conversion of PRFAR and glutamine to IGP, AICAR and glutamate. The HisF subunit catalyzes the cyclization activity that produces IGP and AICAR from PRFAR using the ammonia provided by the HisH subunit. The sequence is that of Imidazole glycerol phosphate synthase subunit HisF from Halorhodospira halophila (strain DSM 244 / SL1) (Ectothiorhodospira halophila (strain DSM 244 / SL1)).